The following is a 192-amino-acid chain: Large ribosomal subunit protein bL9 (192 aa).

The segment at 172–192 (DALRPEDFFDPEADGIDEDEA) is disordered. A compositionally biased stretch (acidic residues) spans 179 to 192 (FFDPEADGIDEDEA).

This sequence belongs to the bacterial ribosomal protein bL9 family.

Functionally, binds to the 23S rRNA. This Rhizobium etli (strain CIAT 652) protein is Large ribosomal subunit protein bL9.